The following is a 634-amino-acid chain: Threonine--tRNA ligase (634 aa).

One can recognise a TGS domain in the interval methionine 1–threonine 61. Positions aspartate 241–proline 532 are catalytic. The Zn(2+) site is built by cysteine 332, histidine 383, and histidine 509.

It belongs to the class-II aminoacyl-tRNA synthetase family. As to quaternary structure, homodimer. Zn(2+) is required as a cofactor.

It is found in the cytoplasm. It carries out the reaction tRNA(Thr) + L-threonine + ATP = L-threonyl-tRNA(Thr) + AMP + diphosphate + H(+). Its function is as follows. Catalyzes the attachment of threonine to tRNA(Thr) in a two-step reaction: L-threonine is first activated by ATP to form Thr-AMP and then transferred to the acceptor end of tRNA(Thr). Also edits incorrectly charged L-seryl-tRNA(Thr). This Francisella tularensis subsp. tularensis (strain FSC 198) protein is Threonine--tRNA ligase.